Here is a 733-residue protein sequence, read N- to C-terminus: Submandibular gland protein C (733 aa).

A signal peptide spans 1–20; that stretch reads MKLILLYLAVVLCFVGKARS. The segment at 48–91 is disordered; the sequence is KSSGGSKDYNLSDGGKSNSRKNLSPATGGSATQQSNLDDSHAPN. A glycan (N-linked (GlcNAc...) asparagine) is linked at asparagine 57. The segment covering 62 to 84 has biased composition (polar residues); that stretch reads GKSNSRKNLSPATGGSATQQSNL. 2 N-linked (GlcNAc...) asparagine glycosylation sites follow: asparagine 141 and asparagine 187. 4 disordered regions span residues 172–204, 249–330, 369–450, and 496–733; these read GQQA…ADKP, LTED…NSSN, and SVTE…PSVA. Positions 186-199 are enriched in polar residues; sequence ENSSLSTGSATSNK. Positions 256–270 are enriched in low complexity; it reads TSTSASVSGDSSTSS. A compositionally biased stretch (polar residues) spans 300 to 318; that stretch reads GSKQNVEDSTLSTGSATSN. Asparagine 327 is a glycosylation site (N-linked (GlcNAc...) asparagine). Residues 376-390 are compositionally biased toward low complexity; it reads TSTSASVSGDSSTSS. The segment covering 420-438 has biased composition (polar residues); it reads GSKQNVEDSTLSTGSATSN. N-linked (GlcNAc...) asparagine glycans are attached at residues asparagine 447, asparagine 514, and asparagine 528. Polar residues-rich tracts occupy residues 496–516 and 525–535; these read SVTE…NNLS and NPTNGSSSASS. The segment covering 538–552 has biased composition (basic and acidic residues); sequence KPYEEGMRKLLKFLE. Low complexity-rich tracts occupy residues 563–574 and 609–619; these read SVSGMSSESSRS and SSNSSTGSATS. Asparagine 611 carries N-linked (GlcNAc...) asparagine glycosylation. The segment covering 654–665 has biased composition (gly residues); it reads GFNGPEGVGENN. The segment covering 677–701 has biased composition (low complexity); that stretch reads GSKSDSGSHNLSSGSGSRSNVSTGG. N-linked (GlcNAc...) asparagine glycans are attached at residues asparagine 686 and asparagine 696. Residues 722-733 show a composition bias toward polar residues; the sequence is TGKTQSGSPSVA.

Post-translationally, N-glycosylated. As to expression, detected in terminal tubule cells of the submandibular gland (at protein level). Expressed in submandibular salivary glands of 3-day-old males but not adults. Expression in adult submandibular glands is restricted to females. Isoform 5 is expressed in both 3-day-old and adult sublingual glands.

The protein localises to the secreted. This chain is Submandibular gland protein C (Muc19), found in Mus musculus (Mouse).